The primary structure comprises 2300 residues: Adenylate cyclase (2300 aa).

2 stretches are compositionally biased toward polar residues: residues 1-21 and 28-41; these read MTRN…SSIT and TPTS…TRPL. Disordered stretches follow at residues 1–256, 272–593, and 631–652; these read MTRN…GSFL, GIRP…DLTR, and TKLF…MDED. 2 stretches are compositionally biased toward low complexity: residues 42–61 and 92–152; these read SPSL…VSRS and SSQS…QVSP. Over residues 153–169 the composition is skewed to polar residues; the sequence is TGGSRLTQSPTTPSNAS. The segment covering 170–185 has biased composition (basic and acidic residues); it reads IREHRMSELGGYRREM. Over residues 204 to 221 the composition is skewed to low complexity; it reads QQQPQQPQQQQQQQQQQQ. A compositionally biased stretch (polar residues) spans 228 to 237; the sequence is VSGTFSNLSQ. Over residues 303–313 the composition is skewed to low complexity; the sequence is SIASITTTASS. The span at 333–344 shows a compositional bias: basic and acidic residues; that stretch reads GDRDDWPGRDSS. A compositionally biased stretch (polar residues) spans 345–357; it reads EISLPQPSHSGPM. The span at 410–421 shows a compositional bias: pro residues; that stretch reads PSRPRTPVPAPE. A compositionally biased stretch (polar residues) spans 455 to 469; that stretch reads DSSQNPPKTSSSARS. Over residues 484-501 the composition is skewed to basic and acidic residues; that stretch reads KSNEDPRALKPSLSREDS. Over residues 511–550 the composition is skewed to polar residues; the sequence is NGSSSMMGTRSRAQSPAPSWTGTSRGLKANSISDGTSSPA. Over residues 552–565 the composition is skewed to basic residues; it reads SHKKGILGRFRRHN. Over residues 631–643 the composition is skewed to low complexity; sequence TKLFTSKKSSSAK. A Ras-associating domain is found at 749 to 841; sequence SNYYIRVFRS…IDEIGREDNS (93 aa). LRR repeat units follow at residues 867-890, 892-914, 915-938, 939-961, 962-986, 988-1008, 1009-1031, 1033-1055, 1056-1079, 1081-1097, 1098-1119, 1120-1142, 1143-1165, 1166-1188, 1189-1211, and 1213-1234; these read NQKL…LYRK, AEIV…FIQA, CTAL…FATA, SKLT…ELSK, LTGL…GAYK, LRTL…ICEL, ETIV…LMKL, NLEK…VRDL, VSLR…DLPR, EILS…SGSF, ERLR…KAPV, PTLK…IDNL, MNLE…IGNL, KKLD…IGCL, TELR…IWWA, and KLEH…ASRA. A disordered region spans residues 1228–1336; sequence PKPASRAPQA…VITPSNGPRK (109 aa). The segment covering 1253 to 1263 has biased composition (polar residues); that stretch reads ANKNGLLSRTP. Residues 1313–1327 show a composition bias toward low complexity; sequence TSVVSRSTTQSSTGV. LRR repeat units lie at residues 1349-1369, 1373-1396, 1398-1420, 1422-1445, 1447-1469, and 1474-1497; these read SGSL…VFEE, LPEL…TIRS, PQLV…DFLE, HCLL…ISRA, KLQV…PYDW, and NRDL…YRQP. Residues 1552–1828 enclose the PPM-type phosphatase domain; sequence PYGMADTLGK…NKLLIMMIGV (277 aa). Residues 1847–1867 are disordered; the sequence is FSMPQDDPSHVPPSGNKRRKV. A Guanylate cyclase domain is found at 1892–2029; that stretch reads SIVFTDIKNS…PMVNKASRIS (138 aa). Mg(2+) is bound by residues D1897 and D1940. The tract at residues 2272–2300 is disordered; that stretch reads LDQAETDDATDNNSSGDVDTLDGSDTEQE. Residues 2290–2300 are compositionally biased toward acidic residues; that stretch reads DTLDGSDTEQE.

Belongs to the adenylyl cyclase class-4/guanylyl cyclase family. Mg(2+) serves as cofactor.

It catalyses the reaction ATP = 3',5'-cyclic AMP + diphosphate. In terms of biological role, plays essential roles in regulation of cellular metabolism by catalyzing the synthesis of a second messenger, cAMP. The polypeptide is Adenylate cyclase (cr-1) (Neurospora crassa (strain ATCC 24698 / 74-OR23-1A / CBS 708.71 / DSM 1257 / FGSC 987)).